We begin with the raw amino-acid sequence, 892 residues long: MTQYTPMIQQYLKVKADYQDAFLFFRLGDFYEMFFEDAVKAAHELEITLTSRDGGSSERIPMCGVPYHAAKNYIEQLVEKGYKVAVCEQVEDPKTAKGVVRREVVQLITPGTMMEGRTIDEKENNFLAALTHFEDGSYALACNDLTTGQNTVTLLTGSVEDILLEVYATGSKEIVVDSSFSKDELNKLTETLKMTISYEDATAIPEGLEHLVKNVSQAKLIKAVGRLFNYVIRTQKRSLDHLQPVEIYYTNQFMKIDVHSKRNLELTETLRTKEKTGSLLWLLDKTKTAMGGRMLKQWMERPLIQKERIEERLEMVETFVNDYFLREDLKEKLKEVYDLERLAGKVAFGNVNARDLLQLRRSLLQVPAILEAISLLDNAYAARLIQGADPCESLTELLGRSIQENPPLSIKDGDIIKDGYNDKLDQYRYVSKNGKTWIAELEKRERDITGIKSLKIGYNRIFGYYIEVTKANLGALPEGRYERKQTLANAERFITDELKEKETLILEAEEKIVQLEYDLFTALREEVKVFIPKLQHLAKVISELDVLQSFATVSEEEQFVKPVLTTKREIFIKDGRHPVVEKVLNGKLYVPNDCIMPENMDVFLITGPNMSGKSTYMRQLALVTVMSQIGCFVPATEAVLPVFDQIFTRIGAADDLISGQSTFMVEMLEAKNAIANASERSLILFDEIGRGTSTYDGMALAQAIIEHIHDQIGAKTLFSTHYHELTVLEESLDQLKNVHVSAIEENGKVVFLHKIQDGAADKSYGIHVAQLAELPDSLIARAKEVLAQLEGQEEIIIPKRVEVKMQEQEVIPEPVVVKEAPVEIEETKVENEEESQLSFFGGEQSPKKQDKPVLDTKETAVLAQIKKIDLLDMTPLEAMNELYRLQKKLKKG.

An ATP-binding site is contributed by 607-614; that stretch reads GPNMSGKS. The disordered stretch occupies residues 833-854; the sequence is EESQLSFFGGEQSPKKQDKPVL. Over residues 845 to 854 the composition is skewed to basic and acidic residues; that stretch reads SPKKQDKPVL.

The protein belongs to the DNA mismatch repair MutS family.

Functionally, this protein is involved in the repair of mismatches in DNA. It is possible that it carries out the mismatch recognition step. This protein has a weak ATPase activity. This chain is DNA mismatch repair protein MutS, found in Bacillus cereus (strain Q1).